A 341-amino-acid polypeptide reads, in one-letter code: Tryptophan--tRNA ligase (341 aa).

ATP-binding positions include 11-13 (RPT) and 19-20 (GH). Positions 12–20 (PTGKLHIGH) match the 'HIGH' region motif. Asp-140 contributes to the L-tryptophan binding site. Residues 152 to 154 (GTD), Leu-194, and 202 to 206 (KMSKS) contribute to the ATP site. The 'KMSKS' region signature appears at 202-206 (KMSKS).

The protein belongs to the class-I aminoacyl-tRNA synthetase family. In terms of assembly, homodimer.

The protein resides in the cytoplasm. The enzyme catalyses tRNA(Trp) + L-tryptophan + ATP = L-tryptophyl-tRNA(Trp) + AMP + diphosphate + H(+). Its function is as follows. Catalyzes the attachment of tryptophan to tRNA(Trp). This chain is Tryptophan--tRNA ligase, found in Streptococcus agalactiae serotype III (strain NEM316).